Consider the following 95-residue polypeptide: Envelope glycoprotein N (95 aa).

The first 26 residues, 1 to 26 (MGLMDIHNAVCSLVIGVAILIATSQA), serve as a signal peptide directing secretion. The Virion surface portion of the chain corresponds to 27 to 55 (TFVDWGSSITSMGDFWESTCSAVGVSIAF). A helical transmembrane segment spans residues 56 to 76 (SSGFSVLFYMGLVAVISALLA). At 77 to 95 (GSYHACFRLFTADMFKEEW) the chain is on the intravirion side.

The protein belongs to the herpesviridae glycoprotein N family. As to quaternary structure, interacts (via N-terminus) with gM (via N-terminus). The gM-gN heterodimer forms the gCII complex.

The protein resides in the virion membrane. The protein localises to the host membrane. It is found in the host Golgi apparatus. Its subcellular location is the host trans-Golgi network. In terms of biological role, envelope glycoprotein necessary for proper maturation of gM and modulation of its membrane fusion activity. Also plays a critical role in virion morphogenesis. The sequence is that of Envelope glycoprotein N from Gallus gallus (Chicken).